A 1231-amino-acid polypeptide reads, in one-letter code: Chromosome-associated kinesin KIF4 (1231 aa).

A Kinesin motor domain is found at 9–337 (PVRVALRCRP…LRYADRARKI (329 aa)). 88-95 (GQTGSGKT) provides a ligand contact to ATP. A coiled-coil region spans residues 351 to 1000 (ELNHLKQQVQ…IKQKLTLLQV (650 aa)). S395 carries the phosphoserine modification. At T800 the chain carries Phosphothreonine. Phosphoserine occurs at positions 802, 811, and 816. Residues 1001–1231 (ASKQKPHLTR…GCSPIQEESH (231 aa)) form a globular region. The segment at 1189–1212 (HPELKSIASESQENKAIGKKKKRA) is disordered. 2 positions are modified to phosphoserine: S1224 and S1230.

The protein belongs to the TRAFAC class myosin-kinesin ATPase superfamily. Kinesin family. Chromokinesin subfamily. The cofactor is [2Fe-2S] cluster. [4Fe-4S] cluster is required as a cofactor. In terms of tissue distribution, expressed in pyramidal cells in juvenile hippocampus, granular cells in juvenile cerebellar cortex and in adult spleen.

The protein localises to the nucleus. It localises to the chromosome. It is found in the cytoplasm. The protein resides in the cytoskeleton. Its function is as follows. Iron-sulfur (Fe-S) cluster binding motor protein that has a role in chromosome segregation during mitosis. Required for mitotic chromosomal positioning and bipolar spindle stabilization. The chain is Chromosome-associated kinesin KIF4 (Kif4) from Mus musculus (Mouse).